The sequence spans 190 residues: Adenylate kinase (190 aa).

ATP is bound at residue 12 to 17 (GSGKTT). The segment at 34 to 63 (STGELLRAEVASGSERGKIIEGFTSKGNLV) is NMP. Residues T35, R40, 61–63 (NLV), 88–91 (GYPR), and Q95 contribute to the AMP site. Residues 130–136 (GRARGAD) are LID. ATP is bound at residue R131. The AMP site is built by R133 and R145. Residue R173 participates in ATP binding.

Belongs to the adenylate kinase family. Monomer.

It is found in the cytoplasm. It catalyses the reaction AMP + ATP = 2 ADP. The protein operates within purine metabolism; AMP biosynthesis via salvage pathway; AMP from ADP: step 1/1. Functionally, catalyzes the reversible transfer of the terminal phosphate group between ATP and AMP. Plays an important role in cellular energy homeostasis and in adenine nucleotide metabolism. The polypeptide is Adenylate kinase (Wolinella succinogenes (strain ATCC 29543 / DSM 1740 / CCUG 13145 / JCM 31913 / LMG 7466 / NCTC 11488 / FDC 602W) (Vibrio succinogenes)).